The following is a 484-amino-acid chain: Diaminopimelate decarboxylase 1, chloroplastic (484 aa).

Over residues M1 to R28 the composition is skewed to polar residues. A disordered region spans residues M1 to I30. Residues M1–A49 constitute a chloroplast transit peptide. An N-acetylalanine modification is found at A50. K125 bears the N6-(pyridoxal phosphate)lysine mark. Residues G304 and E340 to R343 each bind pyridoxal 5'-phosphate. Positions 343, 379, and 383 each coordinate substrate. Residue C411 is the Proton donor of the active site. Substrate contacts are provided by E412 and Y440. Pyridoxal 5'-phosphate is bound at residue Y440.

Belongs to the Orn/Lys/Arg decarboxylase class-II family. LysA subfamily. Homodimer. Pyridoxal 5'-phosphate serves as cofactor.

Its subcellular location is the plastid. It localises to the chloroplast. The catalysed reaction is meso-2,6-diaminopimelate + H(+) = L-lysine + CO2. It functions in the pathway amino-acid biosynthesis; L-lysine biosynthesis via DAP pathway; L-lysine from DL-2,6-diaminopimelate: step 1/1. Functionally, specifically catalyzes the decarboxylation of meso-diaminopimelate (meso-DAP) to L-lysine. This Arabidopsis thaliana (Mouse-ear cress) protein is Diaminopimelate decarboxylase 1, chloroplastic (LYSA1).